A 265-amino-acid polypeptide reads, in one-letter code: Translation initiation factor 2 subunit alpha (265 aa).

In terms of domain architecture, S1 motif spans 12-83; that stretch reads GELIIGTVYK…KKGHVDASLK (72 aa).

Belongs to the eIF-2-alpha family. As to quaternary structure, heterotrimer composed of an alpha, a beta and a gamma chain.

EIF-2 functions in the early steps of protein synthesis by forming a ternary complex with GTP and initiator tRNA. This is Translation initiation factor 2 subunit alpha from Methanobrevibacter smithii (strain ATCC 35061 / DSM 861 / OCM 144 / PS).